A 364-amino-acid polypeptide reads, in one-letter code: Chaperone protein DnaJ 1 (364 aa).

One can recognise a J domain in the interval 7–71 (DYYEILGVNR…ERRSEYDAIL (65 aa)). Residues 124–200 (GCEKEIIYSR…CYGRGRVSAQ (77 aa)) form a CR-type zinc finger. Positions 137, 140, 154, 157, 174, 177, 188, and 191 each coordinate Zn(2+). CXXCXGXG motif repeat units follow at residues 137-144 (CPVCEGMG), 154-161 (CHACNGEG), 174-181 (CSVCKGKG), and 188-195 (CPTCYGRG).

The protein belongs to the DnaJ family. As to quaternary structure, homodimer. Requires Zn(2+) as cofactor.

The protein resides in the cytoplasm. Its function is as follows. Participates actively in the response to hyperosmotic and heat shock by preventing the aggregation of stress-denatured proteins and by disaggregating proteins, also in an autonomous, DnaK-independent fashion. Unfolded proteins bind initially to DnaJ; upon interaction with the DnaJ-bound protein, DnaK hydrolyzes its bound ATP, resulting in the formation of a stable complex. GrpE releases ADP from DnaK; ATP binding to DnaK triggers the release of the substrate protein, thus completing the reaction cycle. Several rounds of ATP-dependent interactions between DnaJ, DnaK and GrpE are required for fully efficient folding. Also involved, together with DnaK and GrpE, in the DNA replication of plasmids through activation of initiation proteins. The polypeptide is Chaperone protein DnaJ 1 (Aquifex aeolicus (strain VF5)).